We begin with the raw amino-acid sequence, 679 residues long: Glycine--tRNA ligase beta subunit (679 aa).

Belongs to the class-II aminoacyl-tRNA synthetase family. As to quaternary structure, tetramer of two alpha and two beta subunits.

The protein resides in the cytoplasm. It catalyses the reaction tRNA(Gly) + glycine + ATP = glycyl-tRNA(Gly) + AMP + diphosphate. The sequence is that of Glycine--tRNA ligase beta subunit from Streptococcus pyogenes serotype M1.